The following is a 212-amino-acid chain: Thymidylate kinase (212 aa).

11 to 18 provides a ligand contact to ATP; sequence GPEGAGKS.

It belongs to the thymidylate kinase family.

The enzyme catalyses dTMP + ATP = dTDP + ADP. Functionally, phosphorylation of dTMP to form dTDP in both de novo and salvage pathways of dTTP synthesis. The chain is Thymidylate kinase from Streptococcus sanguinis (strain SK36).